A 72-amino-acid chain; its full sequence is Cytochrome b-c1 complex subunit 9 (72 aa).

Residues 1 to 27 are Mitochondrial matrix-facing; the sequence is MESAARRSGGGVLEGFYRLVMRRTPVY. The helical transmembrane segment at 28-53 threads the bilayer; that stretch reads VTFVIAGALLGERAVDYGVKTLWEKN. Topologically, residues 54 to 72 are mitochondrial intermembrane; sequence NVGKRYEDISVLGQRPVDE.

Belongs to the UQCR10/QCR9 family. Component of the ubiquinol-cytochrome c oxidoreductase (cytochrome b-c1 complex, complex III, CIII), a multisubunit enzyme composed of 3 respiratory subunits cytochrome b, cytochrome c1 and Rieske protein, 2 core protein subunits, and additional low-molecular weight protein subunits. The complex exists as an obligatory dimer and forms supercomplexes (SCs) in the inner mitochondrial membrane with cytochrome c oxidase (complex IV, CIV).

The protein localises to the mitochondrion inner membrane. Functionally, component of the ubiquinol-cytochrome c oxidoreductase, a multisubunit transmembrane complex that is part of the mitochondrial electron transport chain which drives oxidative phosphorylation. The respiratory chain contains 3 multisubunit complexes succinate dehydrogenase (complex II, CII), ubiquinol-cytochrome c oxidoreductase (cytochrome b-c1 complex, complex III, CIII) and cytochrome c oxidase (complex IV, CIV), that cooperate to transfer electrons derived from NADH and succinate to molecular oxygen, creating an electrochemical gradient over the inner membrane that drives transmembrane transport and the ATP synthase. The cytochrome b-c1 complex catalyzes electron transfer from ubiquinol to cytochrome c, linking this redox reaction to translocation of protons across the mitochondrial inner membrane, with protons being carried across the membrane as hydrogens on the quinol. In the process called Q cycle, 2 protons are consumed from the matrix, 4 protons are released into the intermembrane space and 2 electrons are passed to cytochrome c. This chain is Cytochrome b-c1 complex subunit 9, found in Solanum tuberosum (Potato).